The sequence spans 513 residues: Noroxomaritidine synthase 2 (513 aa).

Residues 14-34 (HYPEILIAIACFLIFSLLLSA) traverse the membrane as a helical segment. Cys458 is a heme binding site.

Belongs to the cytochrome P450 family. It depends on heme as a cofactor. In terms of tissue distribution, mostly expressed in stems, and, to a lower extent, in bulbs, roots, leaves and flowers.

It localises to the membrane. It carries out the reaction 4'-O-methylnorbelladine + reduced [NADPH--hemoprotein reductase] + O2 = (10bR,4aS)-noroxomaritidine + oxidized [NADPH--hemoprotein reductase] + 2 H2O + H(+). The catalysed reaction is 4'-O-methylnorbelladine + reduced [NADPH--hemoprotein reductase] + O2 = (10bS,4aR)-noroxomaritidine + oxidized [NADPH--hemoprotein reductase] + 2 H2O + H(+). The protein operates within alkaloid biosynthesis. In terms of biological role, cytochrome P450 that catalyzes an intramolecular para-para' C-C phenol coupling of 4'-O-methylnorbelladine in alkaloids biosynthesis, including haemanthamine- and crinamine-type alkaloids, promising anticancer agents. Catalyzes the formation of (10bR,4aS)-noroxomaritidine and (10bS,4aR)-noroxomaritidine from 4'-O-methylnorbelladine. In Narcissus pseudonarcissus (Daffodil), this protein is Noroxomaritidine synthase 2.